We begin with the raw amino-acid sequence, 117 residues long: Mini-circle uncharacterized 12.9 kDa protein (117 aa).

This chain is Mini-circle uncharacterized 12.9 kDa protein, found in Streptomyces coelicolor (strain ATCC BAA-471 / A3(2) / M145).